The chain runs to 526 residues: Fluoride export protein 1 (526 aa).

Disordered regions lie at residues 1–73 (MMTA…RRAS) and 90–149 (ASNI…KQAG). Topologically, residues 1–159 (MMTAPSDTEG…VVAKRQKVSR (159 aa)) are cytoplasmic. Basic and acidic residues-rich tracts occupy residues 21-36 (SPDR…DHNH) and 103-123 (PITR…YLRE). A helical transmembrane segment spans residues 160-180 (LATELYTISYLIFFSLLGTLA). The Extracellular portion of the chain corresponds to 181-194 (RLGLQALTSAYPQS). A helical membrane pass occupies residues 195–215 (PIIFPSIWPNFAGCVVMGFLA). At 216–260 (EDRMLFRPDWGQQQPNPKKDDDDDEEAKDIDPAAAKKAHMALKKT) the chain is on the cytoplasmic side. Residues 223–242 (PDWGQQQPNPKKDDDDDEEA) are disordered. Residues 261-281 (IPLYVGLATGFCGSFTSFSSF) form a helical membrane-spanning segment. The Extracellular portion of the chain corresponds to 282–310 (IRDIYLALSNDLAAHGSSAAPVSRNGGYS). A helical membrane pass occupies residues 311–331 (FMALLAVTITTISLSLSGLFA). Over 332–361 (GAHLAIAIATLFTRFDLGLPYTFVSRILDR) the chain is Cytoplasmic. Residues 362-382 (LIVLLGFGCWLGAVLLSIWPP) traverse the membrane as a helical segment. Residues 383–398 (DRHSAQPEKERWRGTA) are Extracellular-facing. Residues 399–419 (TFALVFAPLGCLTRFYASAHL) form a helical membrane-spanning segment. At 420–424 (NGRLP) the chain is on the cytoplasmic side. The helical transmembrane segment at 425 to 445 (SFPLGTFVVNMLGTAVLGMAW) threads the bilayer. The Extracellular portion of the chain corresponds to 446–452 (DLNHVPS). A helical transmembrane segment spans residues 453-473 (LGGVVGCQVLQGVADGFCGCL). Residues 474–492 (TTVSTWVSELAALRRRHAY) are Cytoplasmic-facing. Residues 493–513 (VYGGASVGGGLALMVVVMGSL) form a helical membrane-spanning segment. Topologically, residues 514-526 (RWTEGFGEVKCIS) are extracellular.

Belongs to the fluoride channel Fluc/FEX (TC 1.A.43) family.

The protein resides in the cell membrane. The enzyme catalyses fluoride(in) = fluoride(out). In terms of biological role, fluoride channel required for the rapid expulsion of cytoplasmic fluoride. In Neurospora crassa (strain ATCC 24698 / 74-OR23-1A / CBS 708.71 / DSM 1257 / FGSC 987), this protein is Fluoride export protein 1.